The chain runs to 552 residues: CTP synthase (552 aa).

Residues 1-270 form an amidoligase domain region; it reads MTKYVFVTGG…DRIICEELKL (270 aa). CTP is bound at residue Ser13. Ser13 lines the UTP pocket. ATP is bound by residues 14-19 and Asp71; that span reads SLGKGI. Residues Asp71 and Glu144 each contribute to the Mg(2+) site. CTP contacts are provided by residues 151–153, 191–196, and Lys227; these read DIE and KTKPTQ. Residues 191–196 and Lys227 each bind UTP; that span reads KTKPTQ. The region spanning 295 to 547 is the Glutamine amidotransferase type-1 domain; the sequence is TIGMVGKYVD…VEAALANKQA (253 aa). L-glutamine is bound at residue Gly356. The Nucleophile; for glutamine hydrolysis role is filled by Cys383. L-glutamine contacts are provided by residues 384-387, Glu407, and Arg473; that span reads LGMQ. Active-site residues include His520 and Glu522.

The protein belongs to the CTP synthase family. Homotetramer.

The enzyme catalyses UTP + L-glutamine + ATP + H2O = CTP + L-glutamate + ADP + phosphate + 2 H(+). It catalyses the reaction L-glutamine + H2O = L-glutamate + NH4(+). It carries out the reaction UTP + NH4(+) + ATP = CTP + ADP + phosphate + 2 H(+). Its pathway is pyrimidine metabolism; CTP biosynthesis via de novo pathway; CTP from UDP: step 2/2. Allosterically activated by GTP, when glutamine is the substrate; GTP has no effect on the reaction when ammonia is the substrate. The allosteric effector GTP functions by stabilizing the protein conformation that binds the tetrahedral intermediate(s) formed during glutamine hydrolysis. Inhibited by the product CTP, via allosteric rather than competitive inhibition. In terms of biological role, catalyzes the ATP-dependent amination of UTP to CTP with either L-glutamine or ammonia as the source of nitrogen. Regulates intracellular CTP levels through interactions with the four ribonucleotide triphosphates. This is CTP synthase from Burkholderia cenocepacia (strain HI2424).